The primary structure comprises 576 residues: Homeobox protein invected (576 aa).

5 disordered regions span residues 1–68 (MSTL…DEQT), 80–102 (EVEEEHDLDLEDPASCCSENSVL), 305–344 (GGSVSGSSTGSSKNSGNTNGNRSPLKAPKKSGKPLNLAQS), 364–410 (NSND…GEDS), and 426–476 (SDRP…RPRT). The segment covering 80–91 (EVEEEHDLDLED) has biased composition (acidic residues). 3 stretches are compositionally biased toward low complexity: residues 309-325 (SGSSTGSSKNSGNTNGN), 364-381 (NSNDSNSTATSSSTTNTS), and 395-405 (AGAGATGASGK). Residues 450 to 468 (AGGGGGGVEKGEAADGGGV) show a composition bias toward gly residues. Positions 471–530 (DKRPRTAFSGTQLARLKHEFNENRYLTEKRRQQLSGELGLNEAQIKIWFQNKRAKLKKSS) form a DNA-binding region, homeobox.

Belongs to the engrailed homeobox family. In terms of tissue distribution, expressed in row 6/7 of the embryonic neuroectoderm.

It localises to the nucleus. Its function is as follows. Engrailed (en) and invected (inv) are functionally redundant transcription factors in neuronal precursor cell NB5-3 specification. Inv is unable to substitute for en in other regulatory processes such as maintaining gsb expression in the neuroectoderm after stage 10 of embryogenesis. Maintenance of gsb expression in row 5 of the neuroectoderm involves an as yet unidentified short range signaling molecule. This chain is Homeobox protein invected (inv), found in Drosophila melanogaster (Fruit fly).